The following is a 365-amino-acid chain: Elongation factor Tu (365 aa).

Residues His-1–Thr-7, Asp-62–His-66, and Asn-117–Asp-120 each bind GTP. Residues His-1–Lys-185 enclose the tr-type G domain. Thr-7 contributes to the Mg(2+) binding site.

The protein belongs to the TRAFAC class translation factor GTPase superfamily. Classic translation factor GTPase family. EF-Tu/EF-1A subfamily. Monomer.

It is found in the cytoplasm. It carries out the reaction GTP + H2O = GDP + phosphate + H(+). Its function is as follows. GTP hydrolase that promotes the GTP-dependent binding of aminoacyl-tRNA to the A-site of ribosomes during protein biosynthesis. The polypeptide is Elongation factor Tu (Buchnera aphidicola subsp. Melaphis rhois).